Consider the following 331-residue polypeptide: HTH-type transcriptional regulator RipA (331 aa).

An HTH araC/xylS-type domain is found at 112-209; that stretch reads RAVAQVLVSN…GATPSTFTTG (98 aa). DNA-binding regions (H-T-H motif) lie at residues 129 to 150 and 176 to 199; these read EEFA…LKST and ISVV…RRHT.

Its function is as follows. Under iron limitation, RipA negatively controls the expression of the acn (aconitase), catA (catechol 1,2 dioxygenase), leuCD (isopropylmalate dehydratase), narKGHJI (nitrite/nitrate transporter and nitrate reductase), sdhCAB (succinate dehydrogenase), pta (phosphotransacetylase) and katA (catalase) genes. Binds to the consensus sequence in the promoter region. The sequence is that of HTH-type transcriptional regulator RipA from Corynebacterium glutamicum (strain ATCC 13032 / DSM 20300 / JCM 1318 / BCRC 11384 / CCUG 27702 / LMG 3730 / NBRC 12168 / NCIMB 10025 / NRRL B-2784 / 534).